The sequence spans 278 residues: Pantothenate synthetase (278 aa).

27-34 is an ATP binding site; that stretch reads MGNLHEGH. The active-site Proton donor is the histidine 34. Residue glutamine 58 coordinates (R)-pantoate. Beta-alanine is bound at residue glutamine 58. 147-150 is a binding site for ATP; the sequence is GEKD. Residue glutamine 153 coordinates (R)-pantoate. 184–187 lines the ATP pocket; the sequence is YSSR.

The protein belongs to the pantothenate synthetase family. As to quaternary structure, homodimer.

It is found in the cytoplasm. It carries out the reaction (R)-pantoate + beta-alanine + ATP = (R)-pantothenate + AMP + diphosphate + H(+). It functions in the pathway cofactor biosynthesis; (R)-pantothenate biosynthesis; (R)-pantothenate from (R)-pantoate and beta-alanine: step 1/1. Its function is as follows. Catalyzes the condensation of pantoate with beta-alanine in an ATP-dependent reaction via a pantoyl-adenylate intermediate. This Acidithiobacillus ferrooxidans (strain ATCC 23270 / DSM 14882 / CIP 104768 / NCIMB 8455) (Ferrobacillus ferrooxidans (strain ATCC 23270)) protein is Pantothenate synthetase.